Here is a 431-residue protein sequence, read N- to C-terminus: Adenylosuccinate synthetase (431 aa).

Residues 13–19 (GDEGKGK) and 41–43 (GHT) contribute to the GTP site. The Proton acceptor role is filled by Asp14. Mg(2+) is bound by residues Asp14 and Gly41. IMP-binding positions include 14-17 (DEGK), 39-42 (NAGH), Thr130, Arg144, Gln225, Thr240, and Arg306. The active-site Proton donor is His42. 302-308 (ATTGRQR) is a substrate binding site. GTP-binding positions include Arg308, 334 to 336 (KLD), and 416 to 418 (STG).

This sequence belongs to the adenylosuccinate synthetase family. In terms of assembly, homodimer. Mg(2+) is required as a cofactor.

The protein localises to the cytoplasm. It catalyses the reaction IMP + L-aspartate + GTP = N(6)-(1,2-dicarboxyethyl)-AMP + GDP + phosphate + 2 H(+). Its pathway is purine metabolism; AMP biosynthesis via de novo pathway; AMP from IMP: step 1/2. Functionally, plays an important role in the de novo pathway of purine nucleotide biosynthesis. Catalyzes the first committed step in the biosynthesis of AMP from IMP. The polypeptide is Adenylosuccinate synthetase (Halorhodospira halophila (strain DSM 244 / SL1) (Ectothiorhodospira halophila (strain DSM 244 / SL1))).